The chain runs to 304 residues: UDP-N-acetylenolpyruvoylglucosamine reductase (304 aa).

An FAD-binding PCMH-type domain is found at 33 to 198 (RVGGPVDILL…ITATFCFESG (166 aa)). Arg177 is an active-site residue. Ser227 functions as the Proton donor in the catalytic mechanism. Glu297 is an active-site residue.

It belongs to the MurB family. The cofactor is FAD.

It localises to the cytoplasm. It carries out the reaction UDP-N-acetyl-alpha-D-muramate + NADP(+) = UDP-N-acetyl-3-O-(1-carboxyvinyl)-alpha-D-glucosamine + NADPH + H(+). It participates in cell wall biogenesis; peptidoglycan biosynthesis. Cell wall formation. This Clostridium botulinum (strain Alaska E43 / Type E3) protein is UDP-N-acetylenolpyruvoylglucosamine reductase.